The following is a 1382-amino-acid chain: DNA-directed RNA polymerase subunit beta'' (1382 aa).

4 residues coordinate Zn(2+): Cys224, Cys294, Cys301, and Cys304.

The protein belongs to the RNA polymerase beta' chain family. RpoC2 subfamily. In terms of assembly, in plastids the minimal PEP RNA polymerase catalytic core is composed of four subunits: alpha, beta, beta', and beta''. When a (nuclear-encoded) sigma factor is associated with the core the holoenzyme is formed, which can initiate transcription. Zn(2+) is required as a cofactor.

The protein resides in the plastid. The protein localises to the chloroplast. The enzyme catalyses RNA(n) + a ribonucleoside 5'-triphosphate = RNA(n+1) + diphosphate. Its function is as follows. DNA-dependent RNA polymerase catalyzes the transcription of DNA into RNA using the four ribonucleoside triphosphates as substrates. This Liriodendron tulipifera (Tuliptree) protein is DNA-directed RNA polymerase subunit beta''.